Consider the following 88-residue polypeptide: Probable glutaredoxin ssr2061 (88 aa).

A disulfide bridge connects residues Cys-15 and Cys-18.

It belongs to the glutaredoxin family.

Its function is as follows. Has a glutathione-disulfide oxidoreductase activity in the presence of NADPH and glutathione reductase. Reduces low molecular weight disulfides and proteins. The protein is Probable glutaredoxin ssr2061 of Synechocystis sp. (strain ATCC 27184 / PCC 6803 / Kazusa).